The sequence spans 449 residues: Probable glycine dehydrogenase (decarboxylating) subunit 1 (449 aa).

This sequence belongs to the GcvP family. N-terminal subunit subfamily. In terms of assembly, the glycine cleavage system is composed of four proteins: P, T, L and H. In this organism, the P 'protein' is a heterodimer of two subunits.

The catalysed reaction is N(6)-[(R)-lipoyl]-L-lysyl-[glycine-cleavage complex H protein] + glycine + H(+) = N(6)-[(R)-S(8)-aminomethyldihydrolipoyl]-L-lysyl-[glycine-cleavage complex H protein] + CO2. The glycine cleavage system catalyzes the degradation of glycine. The P protein binds the alpha-amino group of glycine through its pyridoxal phosphate cofactor; CO(2) is released and the remaining methylamine moiety is then transferred to the lipoamide cofactor of the H protein. The polypeptide is Probable glycine dehydrogenase (decarboxylating) subunit 1 (Sulfurisphaera tokodaii (strain DSM 16993 / JCM 10545 / NBRC 100140 / 7) (Sulfolobus tokodaii)).